The chain runs to 273 residues: Putative pyruvate, phosphate dikinase regulatory protein (273 aa).

An ADP-binding site is contributed by 153–160; it reads GISRTSKT.

Belongs to the pyruvate, phosphate/water dikinase regulatory protein family. PDRP subfamily.

It carries out the reaction N(tele)-phospho-L-histidyl/L-threonyl-[pyruvate, phosphate dikinase] + ADP = N(tele)-phospho-L-histidyl/O-phospho-L-threonyl-[pyruvate, phosphate dikinase] + AMP + H(+). It catalyses the reaction N(tele)-phospho-L-histidyl/O-phospho-L-threonyl-[pyruvate, phosphate dikinase] + phosphate + H(+) = N(tele)-phospho-L-histidyl/L-threonyl-[pyruvate, phosphate dikinase] + diphosphate. Bifunctional serine/threonine kinase and phosphorylase involved in the regulation of the pyruvate, phosphate dikinase (PPDK) by catalyzing its phosphorylation/dephosphorylation. The sequence is that of Putative pyruvate, phosphate dikinase regulatory protein from Rhizobium johnstonii (strain DSM 114642 / LMG 32736 / 3841) (Rhizobium leguminosarum bv. viciae).